A 99-amino-acid polypeptide reads, in one-letter code: Ubiquitin-related modifier 1 homolog (99 aa).

Gly99 is subject to 1-thioglycine. A Glycyl lysine isopeptide (Gly-Lys) (interchain with K-? in acceptor proteins) cross-link involves residue Gly99.

This sequence belongs to the URM1 family. In terms of processing, C-terminal thiocarboxylation occurs in 2 steps, it is first acyl-adenylated (-COAMP) via the hesA/moeB/thiF part of the MOCS3 homolog, then thiocarboxylated (-COSH) via the rhodanese domain of the MOCS3 homolog.

The protein localises to the cytoplasm. It functions in the pathway tRNA modification; 5-methoxycarbonylmethyl-2-thiouridine-tRNA biosynthesis. Its function is as follows. Acts as a sulfur carrier required for 2-thiolation of mcm(5)S(2)U at tRNA wobble positions of cytosolic tRNA(Lys), tRNA(Glu) and tRNA(Gln). Serves as sulfur donor in tRNA 2-thiolation reaction by being thiocarboxylated (-COSH) at its C-terminus by MOCS3. The sulfur is then transferred to tRNA to form 2-thiolation of mcm(5)S(2)U. Also acts as a ubiquitin-like protein (UBL) that is covalently conjugated via an isopeptide bond to lysine residues of target proteins. The thiocarboxylated form serves as substrate for conjugation and oxidative stress specifically induces the formation of UBL-protein conjugates. The sequence is that of Ubiquitin-related modifier 1 homolog from Chlamydomonas reinhardtii (Chlamydomonas smithii).